A 223-amino-acid chain; its full sequence is Putative N-acetylmannosamine-6-phosphate 2-epimerase (223 aa).

Belongs to the NanE family.

It carries out the reaction an N-acyl-D-glucosamine 6-phosphate = an N-acyl-D-mannosamine 6-phosphate. Its pathway is amino-sugar metabolism; N-acetylneuraminate degradation; D-fructose 6-phosphate from N-acetylneuraminate: step 3/5. In terms of biological role, converts N-acetylmannosamine-6-phosphate (ManNAc-6-P) to N-acetylglucosamine-6-phosphate (GlcNAc-6-P). This chain is Putative N-acetylmannosamine-6-phosphate 2-epimerase, found in Staphylococcus haemolyticus (strain JCSC1435).